Here is a 122-residue protein sequence, read N- to C-terminus: Large ribosomal subunit protein uL14 (122 aa).

The protein belongs to the universal ribosomal protein uL14 family. As to quaternary structure, part of the 50S ribosomal subunit. Forms a cluster with proteins L3 and L19. In the 70S ribosome, L14 and L19 interact and together make contacts with the 16S rRNA in bridges B5 and B8.

Binds to 23S rRNA. Forms part of two intersubunit bridges in the 70S ribosome. In Lactobacillus gasseri (strain ATCC 33323 / DSM 20243 / BCRC 14619 / CIP 102991 / JCM 1131 / KCTC 3163 / NCIMB 11718 / NCTC 13722 / AM63), this protein is Large ribosomal subunit protein uL14.